A 578-amino-acid polypeptide reads, in one-letter code: Rhoptry protein 4 (578 aa).

A signal peptide spans 1–33 (MGHPTSFGQPSCLVWLAAAFLVLGLCLVQQGAG). Residues 56–82 (VDKYSRDSTEGENTVSEGEAEGSRGGS) are disordered. Positions 259 to 546 (LVRGRRIGLF…ALQAIETPEY (288 aa)) constitute a Protein kinase domain. The segment at 559-578 (LYSGDGTLTGGDDDMPPLET) is disordered. Residues 569–578 (GDDDMPPLET) are compositionally biased toward acidic residues.

In terms of processing, phosphorylated on multiple serine and threonine residues in parasitic extracts and infected cells but not in extracellular parasites.

The protein resides in the secreted. It localises to the parasitophorous vacuole membrane. In terms of biological role, thought to play a role in parasitophorous vacuole membrane function during the infection of host organisms. The polypeptide is Rhoptry protein 4 (Toxoplasma gondii).